Reading from the N-terminus, the 155-residue chain is MPKKFYVSWDNLQREARRLARRQLPVSQWKGIIAVSRGGLVPAALMARELGIRNVETLCISSYDHNNQRDLVVVKAATTAGDGEGWLVVEDLVDTGTTAKAIRELYPKAKFIAIFAKPMGEQLLDDFEVAIPQDTWIEQPWDMALEFATPICDEE.

5-phospho-alpha-D-ribose 1-diphosphate contacts are provided by residues Arg37–Gly38, Arg69, and Glu90–Thr98. Residue Arg69 coordinates GMP. A Mg(2+)-binding site is contributed by Asp91. 2 residues coordinate guanine: Asp94 and Ile137. Residues Asp94 and Ile137 each contribute to the xanthine site. GMP is bound by residues Asp94 to Thr98 and Trp136 to Ile137.

Belongs to the purine/pyrimidine phosphoribosyltransferase family. XGPT subfamily. Homotetramer. Mg(2+) serves as cofactor.

The protein resides in the cell inner membrane. It carries out the reaction GMP + diphosphate = guanine + 5-phospho-alpha-D-ribose 1-diphosphate. The catalysed reaction is XMP + diphosphate = xanthine + 5-phospho-alpha-D-ribose 1-diphosphate. The enzyme catalyses IMP + diphosphate = hypoxanthine + 5-phospho-alpha-D-ribose 1-diphosphate. It participates in purine metabolism; GMP biosynthesis via salvage pathway; GMP from guanine: step 1/1. It functions in the pathway purine metabolism; XMP biosynthesis via salvage pathway; XMP from xanthine: step 1/1. In terms of biological role, purine salvage pathway enzyme that catalyzes the transfer of the ribosyl-5-phosphate group from 5-phospho-alpha-D-ribose 1-diphosphate (PRPP) to the N9 position of the 6-oxopurines guanine and xanthine to form the corresponding ribonucleotides GMP (guanosine 5'-monophosphate) and XMP (xanthosine 5'-monophosphate), with the release of PPi. To a lesser extent, also acts on hypoxanthine. The sequence is that of Xanthine-guanine phosphoribosyltransferase from Aeromonas hydrophila subsp. hydrophila (strain ATCC 7966 / DSM 30187 / BCRC 13018 / CCUG 14551 / JCM 1027 / KCTC 2358 / NCIMB 9240 / NCTC 8049).